Consider the following 131-residue polypeptide: MSWQAYVDEHLMCEIEGHHLASAAILGHDGTVWAQSADFPQFKPEEITGIMKDFDEPGHLAPTGMFVATAKYMVIQGEPGAVIRGKKGAGGITIKKTGQALVVGIYDEPMTPGQCNMVVERLGDYLMKQGL.

The cysteines at positions 13 and 115 are disulfide-linked. Residues 81 to 97 (AVIRGKKGAGGITIKKT) carry the Involved in PIP2 interaction motif. Phosphothreonine is present on threonine 111.

The protein belongs to the profilin family. As to quaternary structure, occurs in many kinds of cells as a complex with monomeric actin in a 1:1 ratio. Post-translationally, phosphorylated by MAP kinases.

It is found in the cytoplasm. The protein localises to the cytoskeleton. Functionally, binds to actin and affects the structure of the cytoskeleton. At high concentrations, profilin prevents the polymerization of actin, whereas it enhances it at low concentrations. The polypeptide is Profilin-7 (Olea europaea (Common olive)).